The primary structure comprises 308 residues: Phenylcoumaran benzylic ether reductase PT1 (308 aa).

NADP(+) contacts are provided by residues 11–17 (GATGYIG), R36, and K46. K134 serves as the catalytic Proton acceptor. R138 is a binding site for NADP(+).

The protein belongs to the NmrA-type oxidoreductase family. Isoflavone reductase subfamily.

The catalysed reaction is (-)-dehydrodiconiferyl alcohol + NADPH + H(+) = (S)-isodihydrodehydrodiconiferyl alcohol + NADP(+). The enzyme catalyses (+)-dehydrodiconiferyl alcohol + NADPH + H(+) = (R)-isodihydrodehydrodiconiferyl alcohol + NADP(+). It catalyses the reaction (2R,3S)-dihydrodehydrodiconiferyl alcohol + NADPH + H(+) = (S)-tetrahydrodehydrodiconiferyl alcohol + NADP(+). It carries out the reaction (2S,3R)-dihydrodehydrodiconiferyl alcohol + NADPH + H(+) = (R)-tetrahydrodehydrodiconiferyl alcohol + NADP(+). In terms of biological role, oxidoreductase involved in lignan biosynthesis. Catalyzes the NADPH-dependent reduction of phenylcoumaran benzylic ethers. Converts dehydrodiconiferyl alcohol (DDC) to isodihydrodehydrodiconiferyl alcohol (IDDDC), and dihydrodehydrodiconiferyl alcohol (DDDC) to tetrahydrodehydrodiconiferyl alcohol (TDDC). The polypeptide is Phenylcoumaran benzylic ether reductase PT1 (Pinus taeda (Loblolly pine)).